Reading from the N-terminus, the 337-residue chain is Putative carboxypeptidase TP_0688 (337 aa).

Catalysis depends on serine 118, which acts as the Nucleophile. Active-site charge relay system residues include glutamate 234 and histidine 302.

This sequence belongs to the peptidase S66 family.

The chain is Putative carboxypeptidase TP_0688 from Treponema pallidum (strain Nichols).